The following is a 176-amino-acid chain: Lipocalin-1 (176 aa).

The N-terminal stretch at 1–19 is a signal peptide; sequence MMRALLLAIGLGLVAALQA. Cys-80 and Cys-171 form a disulfide bridge.

This sequence belongs to the calycin superfamily. Lipocalin family. As to quaternary structure, predominantly monomer. May form homodimer. Interacts with LMBR1L; this interaction mediates the endocytosis of LCN1.

The protein localises to the secreted. Its function is as follows. Could play a role in taste reception. Could be necessary for the concentration and delivery of sapid molecules in the gustatory system. Can bind various ligands, with chemical structures ranging from lipids and retinoids to the macrocyclic antibiotic rifampicin and even to microbial siderophores. Exhibits an extremely wide ligand pocket. The sequence is that of Lipocalin-1 (LCN1) from Sus scrofa (Pig).